The chain runs to 288 residues: Small ribosomal subunit protein uS2 (288 aa).

Low complexity predominate over residues 259-276 (EAAPAAEEAPAAEAEAAA). Residues 259–288 (EAAPAAEEAPAAEAEAAATDTSSESDKTEA) are disordered.

Belongs to the universal ribosomal protein uS2 family.

The sequence is that of Small ribosomal subunit protein uS2 from Maricaulis maris (strain MCS10) (Caulobacter maris).